Reading from the N-terminus, the 148-residue chain is Large ribosomal subunit protein uL15 (148 aa).

Residues 1–51 (MNLSSLKPAEGAVKSRKRIGRGPGSGLGGTSTRGHKGAKSRSGYSKKIGFE) form a disordered region. Positions 21–31 (RGPGSGLGGTS) are enriched in gly residues.

It belongs to the universal ribosomal protein uL15 family. Part of the 50S ribosomal subunit.

In terms of biological role, binds to the 23S rRNA. This is Large ribosomal subunit protein uL15 from Porphyromonas gingivalis (strain ATCC 33277 / DSM 20709 / CIP 103683 / JCM 12257 / NCTC 11834 / 2561).